Consider the following 272-residue polypeptide: Glutamate racemase (272 aa).

Residues 9 to 10 (DS) and 41 to 42 (YG) contribute to the substrate site. The active-site Proton donor/acceptor is Cys-73. 74–75 (NT) contacts substrate. Cys-183 (proton donor/acceptor) is an active-site residue. Residue 184–185 (TH) coordinates substrate.

The protein belongs to the aspartate/glutamate racemases family.

It catalyses the reaction L-glutamate = D-glutamate. It functions in the pathway cell wall biogenesis; peptidoglycan biosynthesis. In terms of biological role, provides the (R)-glutamate required for cell wall biosynthesis. In Shewanella sp. (strain MR-7), this protein is Glutamate racemase.